A 511-amino-acid polypeptide reads, in one-letter code: Glucans biosynthesis protein G (511 aa).

A signal peptide spans Met1–Ala22.

This sequence belongs to the OpgD/OpgG family.

It localises to the periplasm. It functions in the pathway glycan metabolism; osmoregulated periplasmic glucan (OPG) biosynthesis. Involved in the biosynthesis of osmoregulated periplasmic glucans (OPGs). This chain is Glucans biosynthesis protein G, found in Escherichia fergusonii (strain ATCC 35469 / DSM 13698 / CCUG 18766 / IAM 14443 / JCM 21226 / LMG 7866 / NBRC 102419 / NCTC 12128 / CDC 0568-73).